The sequence spans 328 residues: Probable E3 ubiquitin-protein ligase RHC1A (328 aa).

Ser2 is modified (N-acetylserine). The segment at 190–231 (CPVCKDEFELGSEAKQMPCNHIYHSDCIVPWLVQHNSCPVCR) adopts an RING-type; atypical zinc-finger fold. Residues 233–324 (ELPSASGPSS…QQSYMGYSGW (92 aa)) are disordered. Residues 238–250 (SGPSSSQNRTTPT) show a composition bias toward polar residues. Low complexity-rich tracts occupy residues 251–266 (RNYR…NSRE) and 275–290 (FSSF…SSSS). Residues 291–300 (TQNRGGTRNS) are compositionally biased toward polar residues.

The enzyme catalyses S-ubiquitinyl-[E2 ubiquitin-conjugating enzyme]-L-cysteine + [acceptor protein]-L-lysine = [E2 ubiquitin-conjugating enzyme]-L-cysteine + N(6)-ubiquitinyl-[acceptor protein]-L-lysine.. It participates in protein modification; protein ubiquitination. In terms of biological role, probable E3 ubiquitin-protein ligase that may possess E3 ubiquitin ligase activity in vitro. The sequence is that of Probable E3 ubiquitin-protein ligase RHC1A from Arabidopsis thaliana (Mouse-ear cress).